Here is a 643-residue protein sequence, read N- to C-terminus: Phosphomethylpyrimidine synthase (643 aa).

Residues N248, M277, Y306, H342, S362–G364, D403–R406, and E442 contribute to the substrate site. H446 is a binding site for Zn(2+). Residue Y469 coordinates substrate. Position 510 (H510) interacts with Zn(2+). [4Fe-4S] cluster is bound by residues C590, C593, and C598.

This sequence belongs to the ThiC family. In terms of assembly, homodimer. [4Fe-4S] cluster is required as a cofactor.

It carries out the reaction 5-amino-1-(5-phospho-beta-D-ribosyl)imidazole + S-adenosyl-L-methionine = 4-amino-2-methyl-5-(phosphooxymethyl)pyrimidine + CO + 5'-deoxyadenosine + formate + L-methionine + 3 H(+). It participates in cofactor biosynthesis; thiamine diphosphate biosynthesis. In terms of biological role, catalyzes the synthesis of the hydroxymethylpyrimidine phosphate (HMP-P) moiety of thiamine from aminoimidazole ribotide (AIR) in a radical S-adenosyl-L-methionine (SAM)-dependent reaction. The polypeptide is Phosphomethylpyrimidine synthase (Burkholderia cenocepacia (strain HI2424)).